A 126-amino-acid polypeptide reads, in one-letter code: Holo-[acyl-carrier-protein] synthase (126 aa).

Mg(2+) is bound by residues D9 and E58.

It belongs to the P-Pant transferase superfamily. AcpS family. Mg(2+) serves as cofactor.

It localises to the cytoplasm. It catalyses the reaction apo-[ACP] + CoA = holo-[ACP] + adenosine 3',5'-bisphosphate + H(+). Functionally, transfers the 4'-phosphopantetheine moiety from coenzyme A to a Ser of acyl-carrier-protein. In Salmonella newport (strain SL254), this protein is Holo-[acyl-carrier-protein] synthase.